Reading from the N-terminus, the 61-residue chain is Temporin-CG3 (61 aa).

The signal sequence occupies residues 1-22; sequence MFTMKKPLLLLFFLATINLSLC. Positions 23–44 are cleaved as a propeptide — removed in mature form; sequence EQERNAEEERRDEPDERNAEVE.

Belongs to the frog skin active peptide (FSAP) family. Temporin subfamily. As to expression, expressed by the skin glands.

The protein localises to the secreted. Functionally, antimicrobial peptide active against a variety of Gram-positive bacterial strains but not against Gram-negative bacteria. Has weak antifungal activity against a slime mold isolate. Has weak hemolytic activity against human erythrocytes. The sequence is that of Temporin-CG3 from Amolops chunganensis (Chungan torrent frog).